The primary structure comprises 98 residues: Feather keratin 1 (98 aa).

The protein belongs to the avian keratin family. As to quaternary structure, the avian keratins (F-ker, S-ker, C-ker and B-ker) are a complex mixture of very similar polypeptides.

The chain is Feather keratin 1 from Gallus gallus (Chicken).